The primary structure comprises 331 residues: Ketol-acid reductoisomerase (NADP(+)) (331 aa).

The 180-residue stretch at 2-181 (TKVYYEDAVK…GATRAGVIET (180 aa)) folds into the KARI N-terminal Rossmann domain. NADP(+)-binding positions include 25-28 (YGSQ), R48, S52, and 82-85 (DETQ). H107 is an active-site residue. Residue G133 coordinates NADP(+). The KARI C-terminal knotted domain maps to 182-327 (TFKEETETDL…AELREMMPFV (146 aa)). 4 residues coordinate Mg(2+): D190, E194, E226, and E230. S251 is a substrate binding site.

Belongs to the ketol-acid reductoisomerase family. It depends on Mg(2+) as a cofactor.

The enzyme catalyses (2R)-2,3-dihydroxy-3-methylbutanoate + NADP(+) = (2S)-2-acetolactate + NADPH + H(+). It carries out the reaction (2R,3R)-2,3-dihydroxy-3-methylpentanoate + NADP(+) = (S)-2-ethyl-2-hydroxy-3-oxobutanoate + NADPH + H(+). It functions in the pathway amino-acid biosynthesis; L-isoleucine biosynthesis; L-isoleucine from 2-oxobutanoate: step 2/4. Its pathway is amino-acid biosynthesis; L-valine biosynthesis; L-valine from pyruvate: step 2/4. Its function is as follows. Involved in the biosynthesis of branched-chain amino acids (BCAA). Catalyzes an alkyl-migration followed by a ketol-acid reduction of (S)-2-acetolactate (S2AL) to yield (R)-2,3-dihydroxy-isovalerate. In the isomerase reaction, S2AL is rearranged via a Mg-dependent methyl migration to produce 3-hydroxy-3-methyl-2-ketobutyrate (HMKB). In the reductase reaction, this 2-ketoacid undergoes a metal-dependent reduction by NADPH to yield (R)-2,3-dihydroxy-isovalerate. In Listeria monocytogenes serovar 1/2a (strain ATCC BAA-679 / EGD-e), this protein is Ketol-acid reductoisomerase (NADP(+)).